The primary structure comprises 231 residues: Orotidine 5'-phosphate decarboxylase (231 aa).

Residues D11, K32, 59–68 (DLKFHDIPNT), T118, R180, Q189, G209, and R210 contribute to the substrate site. K61 serves as the catalytic Proton donor.

This sequence belongs to the OMP decarboxylase family. Type 1 subfamily. Homodimer.

It catalyses the reaction orotidine 5'-phosphate + H(+) = UMP + CO2. It functions in the pathway pyrimidine metabolism; UMP biosynthesis via de novo pathway; UMP from orotate: step 2/2. In terms of biological role, catalyzes the decarboxylation of orotidine 5'-monophosphate (OMP) to uridine 5'-monophosphate (UMP). The protein is Orotidine 5'-phosphate decarboxylase of Synechocystis sp. (strain ATCC 27184 / PCC 6803 / Kazusa).